Reading from the N-terminus, the 353-residue chain is Anthranilate phosphoribosyltransferase (353 aa).

5-phospho-alpha-D-ribose 1-diphosphate is bound by residues Gly86, 89-90, 96-99, 114-122, and Ser126; these read GD, NVST, and KHGNRAVSG. Gly86 contributes to the anthranilate binding site. Ser98 provides a ligand contact to Mg(2+). Asn117 contributes to the anthranilate binding site. Arg172 lines the anthranilate pocket. The Mg(2+) site is built by Asp231 and Glu232.

The protein belongs to the anthranilate phosphoribosyltransferase family. As to quaternary structure, homodimer. Requires Mg(2+) as cofactor.

The catalysed reaction is N-(5-phospho-beta-D-ribosyl)anthranilate + diphosphate = 5-phospho-alpha-D-ribose 1-diphosphate + anthranilate. It participates in amino-acid biosynthesis; L-tryptophan biosynthesis; L-tryptophan from chorismate: step 2/5. Catalyzes the transfer of the phosphoribosyl group of 5-phosphorylribose-1-pyrophosphate (PRPP) to anthranilate to yield N-(5'-phosphoribosyl)-anthranilate (PRA). The sequence is that of Anthranilate phosphoribosyltransferase from Pseudomonas syringae pv. syringae (strain B728a).